The following is a 75-amino-acid chain: Small ribosomal subunit protein bS18 (75 aa).

It belongs to the bacterial ribosomal protein bS18 family. Part of the 30S ribosomal subunit. Forms a tight heterodimer with protein bS6.

In terms of biological role, binds as a heterodimer with protein bS6 to the central domain of the 16S rRNA, where it helps stabilize the platform of the 30S subunit. The protein is Small ribosomal subunit protein bS18 of Hydrogenovibrio crunogenus (strain DSM 25203 / XCL-2) (Thiomicrospira crunogena).